A 388-amino-acid polypeptide reads, in one-letter code: Chorismate synthase (388 aa).

R39 and R45 together coordinate NADP(+). FMN is bound by residues 130-132 (RSS), 251-252 (NA), G296, 311-315 (KPIPT), and R337.

Belongs to the chorismate synthase family. Homotetramer. Requires FMNH2 as cofactor.

The enzyme catalyses 5-O-(1-carboxyvinyl)-3-phosphoshikimate = chorismate + phosphate. The protein operates within metabolic intermediate biosynthesis; chorismate biosynthesis; chorismate from D-erythrose 4-phosphate and phosphoenolpyruvate: step 7/7. In terms of biological role, catalyzes the anti-1,4-elimination of the C-3 phosphate and the C-6 proR hydrogen from 5-enolpyruvylshikimate-3-phosphate (EPSP) to yield chorismate, which is the branch point compound that serves as the starting substrate for the three terminal pathways of aromatic amino acid biosynthesis. This reaction introduces a second double bond into the aromatic ring system. The chain is Chorismate synthase from Streptococcus uberis (strain ATCC BAA-854 / 0140J).